The primary structure comprises 617 residues: MVTPWRLSVRVCLSHLRCFEFRKELGHSRPLGCSRNARLCWFLLGTLPKLISAHGSVGEGAPGSLCQRKTHWSDLAENGLVEKVAQEGPLARVLLCLRLGLRAGVLLAKFFPLLFLYPLTYLAPGLSTLWLHLLFKATETSGPTYIKLGQWASTRRDLFSEAFCTQFSKLHVQVTPHPWARTEYLLQQAFGEDWGSLLFFETREPVGSGCVAQVYKAFASISLLEEDRIWRLGELSAPGTRAVVMQREPFMKDRKPSENLADEAFLEKLLLPKADLGGSEVGVSQAPWHLPKSDHLIPVAVKVLHPGLLSQVSMDLLLMKIGSKALGLLPGVKWLSLPEIVEEFEKLMVQQTDLRYEAQNLEHFQHNFQDMASVKFPTPLRPLITRDILVETYEESVPVSSYQQAGIPTDLKRKIAQLGINMLLKMIFVDNFVHGDLHPGNILVQGADGVSPSLEMQQQQVNVCDTLVATIAPALCPLRLVLLDAGIVAKLQASDLRNFRAVFQAVVMGQGHRVAELMLHHAQANECRDVERFKAEMATLVTQARKNIVTLEKLHVSSLLSSVFKLLMTHKVKLESNFASIVVAIMVLEGLGRSLDPTLDILEAAKPFLFKGPASFL.

A helical membrane pass occupies residues 103–123; the sequence is AGVLLAKFFPLLFLYPLTYLA. The Protein kinase domain occupies 200 to 609; the sequence is FETREPVGSG…DILEAAKPFL (410 aa). ATP is bound by residues 206–214 and K302; that span reads VGSGCVAQV. D436 (proton acceptor) is an active-site residue.

The protein belongs to the protein kinase superfamily. ADCK protein kinase family.

Its subcellular location is the mitochondrion. It is found in the membrane. Functionally, the function of this protein is not yet clear. It is not known if it has protein kinase activity and what type of substrate it would phosphorylate (Ser, Thr or Tyr). Involved in the mitochondrial import of CoQ precursors, plays a role in muscle mitochondrial function and fatty acid beta-oxidation. This is an uncharacterized protein from Mus musculus (Mouse).